The primary structure comprises 226 residues: Orotate phosphoribosyltransferase (226 aa).

5-phospho-alpha-D-ribose 1-diphosphate contacts are provided by residues R107, K108, K111, and 133-141 (EDLTTDGGS). T137 provides a ligand contact to orotate.

This sequence belongs to the purine/pyrimidine phosphoribosyltransferase family. PyrE subfamily. As to quaternary structure, homodimer. Mg(2+) is required as a cofactor.

The catalysed reaction is orotidine 5'-phosphate + diphosphate = orotate + 5-phospho-alpha-D-ribose 1-diphosphate. The protein operates within pyrimidine metabolism; UMP biosynthesis via de novo pathway; UMP from orotate: step 1/2. Catalyzes the transfer of a ribosyl phosphate group from 5-phosphoribose 1-diphosphate to orotate, leading to the formation of orotidine monophosphate (OMP). The sequence is that of Orotate phosphoribosyltransferase from Dinoroseobacter shibae (strain DSM 16493 / NCIMB 14021 / DFL 12).